A 489-amino-acid chain; its full sequence is Cysteine--tRNA ligase (489 aa).

Cys29 is a Zn(2+) binding site. The short motif at 31–41 is the 'HIGH' region element; sequence ITSYDYCHIGH. Zn(2+) contacts are provided by Cys209, His234, and Glu238. The short motif at 266-270 is the 'KMSKS' region element; the sequence is KMSKS. Lys269 lines the ATP pocket.

Belongs to the class-I aminoacyl-tRNA synthetase family. Monomer. Zn(2+) serves as cofactor.

It localises to the cytoplasm. It catalyses the reaction tRNA(Cys) + L-cysteine + ATP = L-cysteinyl-tRNA(Cys) + AMP + diphosphate. This is Cysteine--tRNA ligase from Desulfotalea psychrophila (strain LSv54 / DSM 12343).